A 395-amino-acid chain; its full sequence is Acetyl-CoA acetyltransferase (395 aa).

Cys-90 serves as the catalytic Acyl-thioester intermediate. CoA-binding residues include Tyr-185 and Lys-230. K(+) is bound at residue Tyr-185. Positions 246, 247, and 249 each coordinate K(+). Ser-250 contributes to the CoA binding site. Residue Val-347 participates in K(+) binding. Active-site proton acceptor residues include His-351 and Cys-381.

Belongs to the thiolase-like superfamily. Thiolase family. Homotetramer.

It localises to the cytoplasm. It carries out the reaction 2 acetyl-CoA = acetoacetyl-CoA + CoA. Its pathway is metabolic intermediate biosynthesis; (R)-mevalonate biosynthesis; (R)-mevalonate from acetyl-CoA: step 1/3. In terms of biological role, acetyl-CoA acetyltransferase; part of the first module of ergosterol biosynthesis pathway that includes the early steps of the pathway, conserved across all eukaryotes, and which results in the formation of mevalonate from acetyl-coenzyme A (acetyl-CoA). Erg10 catalyzes the formation of acetoacetyl-CoA from acetyl-CoA. The first module starts with the action of the cytosolic acetyl-CoA acetyltransferase eg10 that catalyzes the formation of acetoacetyl-CoA. The hydroxymethylglutaryl-CoA synthases erg13 then condenses acetyl-CoA with acetoacetyl-CoA to form HMG-CoA. The rate-limiting step of the early module is the reduction to mevalonate by the 3-hydroxy-3-methylglutaryl-coenzyme A (HMG-CoA) reductases hcs1. The polypeptide is Acetyl-CoA acetyltransferase (erg10) (Schizosaccharomyces pombe (strain 972 / ATCC 24843) (Fission yeast)).